We begin with the raw amino-acid sequence, 356 residues long: Tyrosine recombinase XerS (356 aa).

The region spanning 16 to 121 (IMPWYVLDYY…ALSSLYKYLT (106 aa)) is the Core-binding (CB) domain. In terms of domain architecture, Tyr recombinase spans 169–354 (AFLDYVDKEY…VNDEQKTALD (186 aa)). Residues Arg-210, Lys-234, His-306, Arg-309, and His-332 contribute to the active site. Catalysis depends on Tyr-341, which acts as the O-(3'-phospho-DNA)-tyrosine intermediate.

The protein belongs to the 'phage' integrase family. XerS subfamily.

The protein resides in the cytoplasm. With respect to regulation, ftsK is required for recombination. Functionally, site-specific tyrosine recombinase, which acts by catalyzing the cutting and rejoining of the recombining DNA molecules. Essential to convert dimers of the bacterial chromosome into monomers to permit their segregation at cell division. The polypeptide is Tyrosine recombinase XerS (Streptococcus pyogenes serotype M12 (strain MGAS9429)).